We begin with the raw amino-acid sequence, 78 residues long: MKLIIFTGLTLLLIVSLIDVEAQNEGACLPRGSVCTTNHAGCCSKLTCDCYRRFEKGVEKGQKCWCIPTGLKYSKKKE.

A signal peptide spans 1–22 (MKLIIFTGLTLLLIVSLIDVEA). Residues 23–26 (QNEG) constitute a propeptide that is removed on maturation.

This sequence belongs to the neurotoxin 19 (CSTX) family. 07 (U7-Lctx) subfamily. Post-translationally, contains 4 disulfide bonds. As to expression, expressed by the venom gland.

It localises to the secreted. The protein is U7-lycotoxin-Ls1h of Lycosa singoriensis (Wolf spider).